A 238-amino-acid chain; its full sequence is Adapter protein MecA (238 aa).

Basic and acidic residues predominate over residues 120–136; sequence QQQKDNKQNQDQNERNR. Residues 120–139 form a disordered region; sequence QQQKDNKQNQDQNERNRQNT.

It belongs to the MecA family. In terms of assembly, homodimer.

Enables the recognition and targeting of unfolded and aggregated proteins to the ClpC protease or to other proteins involved in proteolysis. The sequence is that of Adapter protein MecA from Staphylococcus saprophyticus subsp. saprophyticus (strain ATCC 15305 / DSM 20229 / NCIMB 8711 / NCTC 7292 / S-41).